Here is a 211-residue protein sequence, read N- to C-terminus: Thiamine-phosphate synthase (211 aa).

Residues 37–41 and N69 contribute to the 4-amino-2-methyl-5-(diphosphooxymethyl)pyrimidine site; that span reads QLRIK. Residues D70 and D89 each coordinate Mg(2+). Residue S108 participates in 4-amino-2-methyl-5-(diphosphooxymethyl)pyrimidine binding. 2-[(2R,5Z)-2-carboxy-4-methylthiazol-5(2H)-ylidene]ethyl phosphate is bound at residue 134 to 136; sequence TQT. Residue K137 coordinates 4-amino-2-methyl-5-(diphosphooxymethyl)pyrimidine. Residues G166 and 186 to 187 contribute to the 2-[(2R,5Z)-2-carboxy-4-methylthiazol-5(2H)-ylidene]ethyl phosphate site; that span reads VS.

This sequence belongs to the thiamine-phosphate synthase family. Requires Mg(2+) as cofactor.

The enzyme catalyses 2-[(2R,5Z)-2-carboxy-4-methylthiazol-5(2H)-ylidene]ethyl phosphate + 4-amino-2-methyl-5-(diphosphooxymethyl)pyrimidine + 2 H(+) = thiamine phosphate + CO2 + diphosphate. It carries out the reaction 2-(2-carboxy-4-methylthiazol-5-yl)ethyl phosphate + 4-amino-2-methyl-5-(diphosphooxymethyl)pyrimidine + 2 H(+) = thiamine phosphate + CO2 + diphosphate. The catalysed reaction is 4-methyl-5-(2-phosphooxyethyl)-thiazole + 4-amino-2-methyl-5-(diphosphooxymethyl)pyrimidine + H(+) = thiamine phosphate + diphosphate. Its pathway is cofactor biosynthesis; thiamine diphosphate biosynthesis; thiamine phosphate from 4-amino-2-methyl-5-diphosphomethylpyrimidine and 4-methyl-5-(2-phosphoethyl)-thiazole: step 1/1. Functionally, condenses 4-methyl-5-(beta-hydroxyethyl)thiazole monophosphate (THZ-P) and 2-methyl-4-amino-5-hydroxymethyl pyrimidine pyrophosphate (HMP-PP) to form thiamine monophosphate (TMP). In Escherichia coli O1:K1 / APEC, this protein is Thiamine-phosphate synthase.